Consider the following 194-residue polypeptide: MSEIKLIVGLGNPGEKYADTRHNAGEWLIERLARRFNVSLNPESKFFGKTARTLVNGKEVRLLVPTTFMNLSGKAVGALASFYRIKPEEILVIHDELDLPAGTAKLKQGGGHGGHNGLKDIVAQLGNNNNFYRLRIGIGHPGHRDLVAGYVLNKPSPADRDALEKVLDEATDCVEIIFKDGMIKATNRLNSFKI.

Tyr-17 lines the tRNA pocket. His-22 acts as the Proton acceptor in catalysis. 3 residues coordinate tRNA: Phe-68, Asn-70, and Asn-116.

It belongs to the PTH family. As to quaternary structure, monomer.

The protein resides in the cytoplasm. It carries out the reaction an N-acyl-L-alpha-aminoacyl-tRNA + H2O = an N-acyl-L-amino acid + a tRNA + H(+). Its function is as follows. Hydrolyzes ribosome-free peptidyl-tRNAs (with 1 or more amino acids incorporated), which drop off the ribosome during protein synthesis, or as a result of ribosome stalling. Catalyzes the release of premature peptidyl moieties from peptidyl-tRNA molecules trapped in stalled 50S ribosomal subunits, and thus maintains levels of free tRNAs and 50S ribosomes. The chain is Peptidyl-tRNA hydrolase from Haemophilus influenzae (strain 86-028NP).